A 287-amino-acid chain; its full sequence is ATP synthase gamma chain (287 aa).

This sequence belongs to the ATPase gamma chain family. In terms of assembly, F-type ATPases have 2 components, CF(1) - the catalytic core - and CF(0) - the membrane proton channel. CF(1) has five subunits: alpha(3), beta(3), gamma(1), delta(1), epsilon(1). CF(0) has three main subunits: a, b and c.

The protein localises to the cell inner membrane. Its function is as follows. Produces ATP from ADP in the presence of a proton gradient across the membrane. The gamma chain is believed to be important in regulating ATPase activity and the flow of protons through the CF(0) complex. The chain is ATP synthase gamma chain from Sodalis glossinidius (strain morsitans).